Consider the following 64-residue polypeptide: UPF0434 protein Oant_3286 (64 aa).

The protein belongs to the UPF0434 family.

The sequence is that of UPF0434 protein Oant_3286 from Brucella anthropi (strain ATCC 49188 / DSM 6882 / CCUG 24695 / JCM 21032 / LMG 3331 / NBRC 15819 / NCTC 12168 / Alc 37) (Ochrobactrum anthropi).